The chain runs to 401 residues: MDIKKILAEVKRGCAELIDEERIEKLIKNYYEKGENFFIKAGFDPTAPDLHLGHSVVLTKMAFLQKHGAIVQFLIGDFTGQIGDPSGKSATRKKLDKEQVLINAKTYETQVFKVLDKEKTQIKFNSTWLNELGAAGIVELTSTFSVARMLERDDFTKRFKEQSPISICEFLYPLLQGYDSVALKSDIEMGGTDQKFNLLMGRQLQRVYNIGKEQAVIMMPLLEGLDGVNKMSKSLNNYIGVTEKANDMYAKILSISDELMFRYYELLSQKSLEEIAQIKKDIEQSNLHPKKAKENLALEITERFHSKEEANNAKSEFDRIHSQNALPSDMAEFEIQGKIWLAKALVECGLESSTSAARRSISANAVSVNSQKVSDEQMYLKQGEYILQIGKRKFAKLKVKE.

Residues 45 to 54 (PTAPDLHLGH) carry the 'HIGH' region motif. Positions 230–234 (KMSKS) match the 'KMSKS' region motif. ATP is bound at residue K233. Positions 339-399 (IWLAKALVEC…GKRKFAKLKV (61 aa)) constitute an S4 RNA-binding domain.

Belongs to the class-I aminoacyl-tRNA synthetase family. TyrS type 2 subfamily. Homodimer.

It localises to the cytoplasm. It catalyses the reaction tRNA(Tyr) + L-tyrosine + ATP = L-tyrosyl-tRNA(Tyr) + AMP + diphosphate + H(+). Its function is as follows. Catalyzes the attachment of tyrosine to tRNA(Tyr) in a two-step reaction: tyrosine is first activated by ATP to form Tyr-AMP and then transferred to the acceptor end of tRNA(Tyr). The polypeptide is Tyrosine--tRNA ligase (Campylobacter jejuni (strain RM1221)).